A 323-amino-acid polypeptide reads, in one-letter code: Transcription factor MYB56 (323 aa).

The span at 1–14 (MNPNLLEKDLRGKE) shows a compositional bias: basic and acidic residues. Positions 1 to 84 (MNPNLLEKDL…EKSLRMRGKS (84 aa)) are disordered. Over residues 27–60 (NFRSLPNSHTAACKTSLNNPSISRNHPHNKSASV) the composition is skewed to polar residues. Residues 66 to 78 (EHGNERGENEKSL) show a composition bias toward basic and acidic residues. 2 HTH myb-type domains span residues 88 to 139 (TKVC…FNQL) and 140 to 194 (DPRI…ARRT). DNA-binding regions (H-T-H motif) lie at residues 116–138 (WNLI…WFNQ) and 167–190 (WALI…HVIM). The tract at residues 192–217 (RRTRESQRQRQQPPPTLSRDAEMTVS) is disordered.

Forms homodimer. Interacts with the dephosphorylated active form of BES1 in the nucleus of quiescent center (QC) cells. Interacts with BPM1, BPM2, BPM3, BPM4, BPM5 and BPM6 at the promoter of FLOWERING LOCUS T (FT). Mostly expressed in flowers (at protein level) and siliques, and, to a lower extent, in roots, stems and leaves. Expressed in embryos (e.g. heart and torpedo stages) and cotyledons, and, at low levels, in roots and inflorescence. Accumulates specifically in root apical meristem quiescent center (QC) and vascular initial cells.

The protein resides in the nucleus. Its subcellular location is the cytoplasm. It is found in the cytosol. Acts as a cell-specific local repressor of quiescent center (QC) self-renewal by cell divisions in the primary root. Counteracts brassinosteroid (BR)-mediated cell division in the QC cells. Regulates maternally seed size, especially before the heart stage, promoting both endothelial cells expansion and cell number in the outer integument layer of the seed coat. Modulates the expression of genes involved in cell wall metabolism such as cell division and expansion. Negative regulator of flowering via the repression of FT transcription. This chain is Transcription factor MYB56, found in Arabidopsis thaliana (Mouse-ear cress).